The chain runs to 382 residues: Glutaminyl-peptide cyclotransferase-like protein (382 aa).

A helical membrane pass occupies residues 35-55 (LLPLLLALAVGSAFYTIWSGW). A disulfide bond links Cys-167 and Cys-191. Asp-186 is a Zn(2+) binding site. The active-site Proton acceptor is Glu-225. Position 226 (Glu-226) interacts with Zn(2+). Asp-269 functions as the Proton acceptor in the catalytic mechanism. His-351 lines the Zn(2+) pocket.

Belongs to the glutaminyl-peptide cyclotransferase family.

The protein resides in the golgi apparatus membrane. The catalysed reaction is N-terminal L-glutaminyl-[peptide] = N-terminal 5-oxo-L-prolyl-[peptide] + NH4(+). Its function is as follows. Responsible for the biosynthesis of pyroglutamyl peptides. The sequence is that of Glutaminyl-peptide cyclotransferase-like protein (QPCTL) from Homo sapiens (Human).